Consider the following 308-residue polypeptide: Ribosomal RNA small subunit methyltransferase H (308 aa).

Residues 32–34, Asp-51, Phe-78, Asp-99, and Gln-106 contribute to the S-adenosyl-L-methionine site; that span reads GGH.

This sequence belongs to the methyltransferase superfamily. RsmH family.

Its subcellular location is the cytoplasm. The catalysed reaction is cytidine(1402) in 16S rRNA + S-adenosyl-L-methionine = N(4)-methylcytidine(1402) in 16S rRNA + S-adenosyl-L-homocysteine + H(+). In terms of biological role, specifically methylates the N4 position of cytidine in position 1402 (C1402) of 16S rRNA. The sequence is that of Ribosomal RNA small subunit methyltransferase H from Campylobacter curvus (strain 525.92).